The chain runs to 313 residues: MNKAVIAIHGGAGAIARAQMSHEQELRYIQALSEIVESGQKMLEAGDSALDVVTEAVRLLEACPLFNAGIGAVYTRDGTHELDACVMDGNTLKAGAVAGVSHVRHPVLAARLVMERSPHVLMVGEGAENFAFSQGMARVSPDIFSTPARYEQLLAARAAGEMALDHSGAPLDETKKMGTVGAVARDKFGNLAAATSTGGMTNKLPGRVGDSPLVGAGCYANNASVAVSCTGTGEVFIRTLAAYDIAALMEYGGLSLADACERVVMEKLPALGGSGGLIAVDHEGNVALPFNSEGMYRAWGYAGDTPTTGIYRE.

Threonine 179 serves as the catalytic Nucleophile. Substrate contacts are provided by residues 207–210 (RVGD) and 230–233 (TGTG).

The protein belongs to the Ntn-hydrolase family. As to quaternary structure, heterotetramer of two alpha and two beta chains arranged as a dimer of alpha/beta heterodimers. Autocleaved. Generates the alpha and beta subunits. The beta subunit is thought to be responsible for the nucleophile hydrolase activity.

The enzyme catalyses Cleavage of a beta-linked Asp residue from the N-terminus of a polypeptide.. Its function is as follows. Degrades proteins damaged by L-isoaspartyl residue formation (also known as beta-Asp residues). Degrades L-isoaspartyl-containing di- and tripeptides. Acts best on iso-Asp-Leu, followed by iso-Asp-Ala, -His and to a lesser extent iso-Asp-Lys, -Phe and iso-Asp-Leu-Ala. Does not act on internal iso-Asp bonds (Als-iso-Asp-Leu-Ala). Does not act on alpha-Asp bonds. Has poor L-asparaginase activity. The sequence is that of Isoaspartyl peptidase (iaaA) from Salmonella typhimurium (strain LT2 / SGSC1412 / ATCC 700720).